We begin with the raw amino-acid sequence, 183 residues long: Putative manganese efflux pump MntP (183 aa).

A run of 6 helical transmembrane segments spans residues 8–28 (IIALSMMALALGMDAFSVALG), 40–60 (FYIGLTIGLFHILMPLAGMAV), 72–92 (ATYAGGALLLWLGGQMIIASF), 108–128 (LFFAFSVSLDSFSVGLSLGIF), 133–153 (MVTILLFGLFSMVLTWVGLFV), and 163–183 (SYSEALGGSILLAFGLKLLFL).

It belongs to the MntP (TC 9.B.29) family.

Its subcellular location is the cell membrane. In terms of biological role, probably functions as a manganese efflux pump. The sequence is that of Putative manganese efflux pump MntP from Geobacillus kaustophilus (strain HTA426).